Consider the following 483-residue polypeptide: Glutamyl-tRNA(Gln) amidotransferase subunit A (483 aa).

Active-site charge relay system residues include lysine 76 and serine 151. The Acyl-ester intermediate role is filled by serine 175.

It belongs to the amidase family. GatA subfamily. As to quaternary structure, heterotrimer of A, B and C subunits.

It catalyses the reaction L-glutamyl-tRNA(Gln) + L-glutamine + ATP + H2O = L-glutaminyl-tRNA(Gln) + L-glutamate + ADP + phosphate + H(+). Allows the formation of correctly charged Gln-tRNA(Gln) through the transamidation of misacylated Glu-tRNA(Gln) in organisms which lack glutaminyl-tRNA synthetase. The reaction takes place in the presence of glutamine and ATP through an activated gamma-phospho-Glu-tRNA(Gln). The sequence is that of Glutamyl-tRNA(Gln) amidotransferase subunit A from Nitrosococcus oceani (strain ATCC 19707 / BCRC 17464 / JCM 30415 / NCIMB 11848 / C-107).